Consider the following 95-residue polypeptide: MTQKEKNETCIHVTVSGKVQGVFFRESVRKKAEELQLTGWVKNLSHGDVELVACGERDSIMILTEWLWEGPPQAAVSNVNWEEIVVEDYSDFRVR.

One can recognise an Acylphosphatase-like domain in the interval 10-95 (CIHVTVSGKV…VEDYSDFRVR (86 aa)). Catalysis depends on residues Arg25 and Asn43.

The protein belongs to the acylphosphatase family.

The catalysed reaction is an acyl phosphate + H2O = a carboxylate + phosphate + H(+). This is Acylphosphatase (acyP) from Coxiella burnetii (strain RSA 493 / Nine Mile phase I).